The following is a 307-amino-acid chain: Putative S-adenosyl-L-methionine-dependent methyltransferase Mflv_5023 (307 aa).

Residues D133 and 162-163 each bind S-adenosyl-L-methionine; that span reads DL. The tract at residues 213 to 234 is disordered; it reads SRLAVESVPSQQSADQDEMREK.

Belongs to the UPF0677 family.

In terms of biological role, exhibits S-adenosyl-L-methionine-dependent methyltransferase activity. The sequence is that of Putative S-adenosyl-L-methionine-dependent methyltransferase Mflv_5023 from Mycolicibacterium gilvum (strain PYR-GCK) (Mycobacterium gilvum (strain PYR-GCK)).